Consider the following 236-residue polypeptide: C-&gt;U-editing enzyme APOBEC-1 (236 aa).

The 125-residue stretch at 10–134 (GDPTLRRRIE…QQNRQGLRDL (125 aa)) folds into the CMP/dCMP-type deaminase domain. His-61 is a binding site for Zn(2+). The active-site Proton donor is Glu-63. 2 residues coordinate Zn(2+): Cys-93 and Cys-96.

Belongs to the cytidine and deoxycytidylate deaminase family. Homodimer. Interacts with A1CF; form an mRNA editing complex. Interacts with RBM47; form an mRNA editing complex. Found in a complex with CELF2/CUGBP2 and A1CF. Interacts with HNRPAB. Interacts with SYNCRIP. It depends on Zn(2+) as a cofactor. As to expression, expressed exclusively in the small intestine.

The protein resides in the cytoplasm. It localises to the nucleus. It carries out the reaction a cytidine in mRNA + H2O + H(+) = a uridine in mRNA + NH4(+). The catalysed reaction is cytidine(6666) in apoB mRNA + H2O + H(+) = uridine(6666) in apoB mRNA + NH4(+). Functionally, cytidine deaminase catalyzing the cytidine to uridine postranscriptional editing of a variety of mRNAs. Form complexes with cofactors that confer differential editing activity and selectivity. Responsible for the postranscriptional editing of a CAA codon for Gln to a UAA codon for stop in the apolipoprotein B mRNA. Also involved in CGA (Arg) to UGA (Stop) editing in the NF1 mRNA. May also play a role in the epigenetic regulation of gene expression by participating in DNA demethylation. This is C-&gt;U-editing enzyme APOBEC-1 from Homo sapiens (Human).